Reading from the N-terminus, the 185-residue chain is Elongation factor P (185 aa).

The protein belongs to the elongation factor P family.

The protein localises to the cytoplasm. The protein operates within protein biosynthesis; polypeptide chain elongation. Functionally, involved in peptide bond synthesis. Stimulates efficient translation and peptide-bond synthesis on native or reconstituted 70S ribosomes in vitro. Probably functions indirectly by altering the affinity of the ribosome for aminoacyl-tRNA, thus increasing their reactivity as acceptors for peptidyl transferase. In Fervidobacterium nodosum (strain ATCC 35602 / DSM 5306 / Rt17-B1), this protein is Elongation factor P.